A 162-amino-acid chain; its full sequence is Dihydrofolate reductase (162 aa).

Residues 3-161 (KITLIAACAE…TRYAFVHYLR (159 aa)) form the DHFR domain. Position 7-9 (7-9 (IAA)) interacts with substrate. NADP(+) is bound by residues 8 to 9 (AA) and 16 to 21 (IGAGNA). Aspartate 29 contributes to the substrate binding site. Residue 45–48 (GRKT) coordinates NADP(+). Residue arginine 60 coordinates substrate. Residues 65–68 (ISRQ) and 98–103 (MGGAQI) contribute to the NADP(+) site. Threonine 117 is a substrate binding site.

This sequence belongs to the dihydrofolate reductase family.

The enzyme catalyses (6S)-5,6,7,8-tetrahydrofolate + NADP(+) = 7,8-dihydrofolate + NADPH + H(+). The protein operates within cofactor biosynthesis; tetrahydrofolate biosynthesis; 5,6,7,8-tetrahydrofolate from 7,8-dihydrofolate: step 1/1. Its function is as follows. Key enzyme in folate metabolism. Catalyzes an essential reaction for de novo glycine and purine synthesis, and for DNA precursor synthesis. The polypeptide is Dihydrofolate reductase (folA) (Neisseria meningitidis serogroup B (strain ATCC BAA-335 / MC58)).